A 142-amino-acid polypeptide reads, in one-letter code: Alpha-lactalbumin (142 aa).

An N-terminal signal peptide occupies residues 1 to 19 (MMSFVSLLLVGILFHATQA). The C-type lysozyme domain occupies 20-142 (EQLTKCEVFQ…KLDQWLCEKL (123 aa)). Cystine bridges form between Cys25–Cys139, Cys47–Cys130, Cys80–Cys96, and Cys92–Cys110. 2 N-linked (GlcNAc...) asparagine glycosylation sites follow: Asn64 and Asn93. 5 residues coordinate Ca(2+): Lys98, Asp101, Asp103, Asp106, and Asp107.

The protein belongs to the glycosyl hydrolase 22 family. As to quaternary structure, lactose synthase (LS) is a heterodimer of a catalytic component, beta1,4-galactosyltransferase (beta4Gal-T1) and a regulatory component, alpha-lactalbumin (LA). As to expression, mammary gland specific. Secreted in milk.

Its subcellular location is the secreted. Functionally, regulatory subunit of lactose synthase, changes the substrate specificity of galactosyltransferase in the mammary gland making glucose a good acceptor substrate for this enzyme. This enables LS to synthesize lactose, the major carbohydrate component of milk. In other tissues, galactosyltransferase transfers galactose onto the N-acetylglucosamine of the oligosaccharide chains in glycoproteins. The chain is Alpha-lactalbumin (LALBA) from Ovis aries (Sheep).